The following is an 82-amino-acid chain: MMAKLMITVMMVLLLSLQQGADGRSKRWRKNQMAASSIMRNLITARVDPPRFCNHKICYEDSECSQWCTAGCNSITSKCDTL.

The N-terminal stretch at 1-23 (MMAKLMITVMMVLLLSLQQGADG) is a signal peptide. A propeptide spanning residues 24-46 (RSKRWRKNQMAASSIMRNLITAR) is cleaved from the precursor. 4-hydroxyproline is present on residues Pro49 and Pro50. Intrachain disulfides connect Cys53-Cys68, Cys58-Cys72, and Cys64-Cys79. 4-carboxyglutamate occurs at positions 60 and 63.

It belongs to the Pg turripeptide superfamily. As to expression, expressed by the venom duct.

It is found in the secreted. In Gemmula speciosa (Splendid gem-turris), this protein is Turripeptide Gsp9.1.